We begin with the raw amino-acid sequence, 265 residues long: Type II pantothenate kinase (265 aa).

An ATP-binding site is contributed by 6–13 (DAGGTLIK). The Proton acceptor role is filled by E70. Residues T99, 121-125 (GGMIQ), Y137, and S225 contribute to the ATP site.

This sequence belongs to the type II pantothenate kinase family. In terms of assembly, homodimer.

The protein localises to the cytoplasm. The catalysed reaction is (R)-pantothenate + ATP = (R)-4'-phosphopantothenate + ADP + H(+). The protein operates within cofactor biosynthesis; coenzyme A biosynthesis; CoA from (R)-pantothenate: step 1/5. Its function is as follows. Catalyzes the phosphorylation of pantothenate (Pan), the first step in CoA biosynthesis. The chain is Type II pantothenate kinase from Staphylococcus epidermidis (strain ATCC 12228 / FDA PCI 1200).